A 385-amino-acid chain; its full sequence is 1-deoxy-D-xylulose 5-phosphate reductoisomerase (385 aa).

Positions 13, 14, 15, 16, 40, and 122 each coordinate NADPH. Position 123 (Lys123) interacts with 1-deoxy-D-xylulose 5-phosphate. Residue Glu124 participates in NADPH binding. Asp148 is a binding site for Mn(2+). Residues Ser149, Glu150, Ser177, and His200 each contribute to the 1-deoxy-D-xylulose 5-phosphate site. Residue Glu150 participates in Mn(2+) binding. Gly206 is a binding site for NADPH. Residues Ser213, Asn218, Lys219, and Glu222 each contribute to the 1-deoxy-D-xylulose 5-phosphate site. Glu222 contacts Mn(2+).

Belongs to the DXR family. The cofactor is Mg(2+). Mn(2+) is required as a cofactor.

It catalyses the reaction 2-C-methyl-D-erythritol 4-phosphate + NADP(+) = 1-deoxy-D-xylulose 5-phosphate + NADPH + H(+). It functions in the pathway isoprenoid biosynthesis; isopentenyl diphosphate biosynthesis via DXP pathway; isopentenyl diphosphate from 1-deoxy-D-xylulose 5-phosphate: step 1/6. Catalyzes the NADPH-dependent rearrangement and reduction of 1-deoxy-D-xylulose-5-phosphate (DXP) to 2-C-methyl-D-erythritol 4-phosphate (MEP). The protein is 1-deoxy-D-xylulose 5-phosphate reductoisomerase of Francisella tularensis subsp. holarctica (strain FTNF002-00 / FTA).